Here is a 426-residue protein sequence, read N- to C-terminus: Ubiquitin carboxyl-terminal hydrolase 46 (426 aa).

The N-myristoyl glycine moiety is linked to residue G2. In terms of domain architecture, USP spans 27-406; that stretch reads YGLVNFGNTC…SAYILFYQAR (380 aa). The active-site Nucleophile is the C36. The interval 162-181 is disordered; sequence TAGLPRSDEKGTSERNGGIT. The active-site Proton acceptor is H342.

The protein belongs to the peptidase C19 family. As to quaternary structure, interacts with wdr-20 and wdr-48; the catalytic activity of usp-46 is increased in the presence of both wdr-20 and wdr-48. Interacts with glr-1; the interaction results in deubiquitination of glr-1. Expressed in a number of tissues including the nervous system, pharynx, body wall muscle, vulva muscle and intestine and is detected in many head and ventral cord neurons.

It is found in the perikaryon. The protein localises to the cytoplasm. It carries out the reaction Thiol-dependent hydrolysis of ester, thioester, amide, peptide and isopeptide bonds formed by the C-terminal Gly of ubiquitin (a 76-residue protein attached to proteins as an intracellular targeting signal).. Its function is as follows. Regulates the abundance of the glr-1 glutamate receptor in the ventral nerve cord by promoting its deubiquitination and preventing its degradation in the lysosome. Contributes to the regulation of embryonic polarity. In Caenorhabditis elegans, this protein is Ubiquitin carboxyl-terminal hydrolase 46 (usp-46).